A 151-amino-acid polypeptide reads, in one-letter code: Large ribosomal subunit protein bL9 (151 aa).

Belongs to the bacterial ribosomal protein bL9 family.

Binds to the 23S rRNA. The protein is Large ribosomal subunit protein bL9 of Prochlorococcus marinus (strain MIT 9215).